The sequence spans 577 residues: Protein hinderin (577 aa).

Residue Ser21 is modified to Phosphoserine. Residues 91 to 167 (LKDLCLEDKR…CQELLSLYQK (77 aa)) are a coiled coil. Position 179 is a phosphoserine (Ser179). The disordered stretch occupies residues 251–282 (TLHHPKDDLDKIPSETTTCNCESPGRKPAVPT). Residues 254–263 (HPKDDLDKIP) are compositionally biased toward basic and acidic residues. The stretch at 358–402 (LKKQISEDRKQQLMLQKMELEIEKERLQHLLAQQETKLLLKQQQL) forms a coiled coil. Disordered stretches follow at residues 425-444 (SSSIKKHQDPPNSGENRKER), 449-492 (FHSH…GSLK), and 520-540 (LSPNSAPKPQRYPSREAGAWN). Basic and acidic residues predominate over residues 449–468 (FHSHMKDDAQWSCQKKDTCR). A phosphoserine mark is found at Ser490 and Ser521.

In terms of assembly, interacts (via N- and C-terminal domains) with SMC3 (via central hinge region). In terms of tissue distribution, widely expressed.

In terms of biological role, competes with SMC1 for binding to SMC3. May affect the availability of SMC3 to engage in the formation of multimeric protein complexes. This is Protein hinderin (KIAA1328) from Homo sapiens (Human).